The primary structure comprises 273 residues: Eukaryotic translation initiation factor 3 subunit G-2 (273 aa).

Positions 193–271 (SAVRISNLSE…LILCVEWSKP (79 aa)) constitute an RRM domain.

The protein belongs to the eIF-3 subunit G family. Component of the eukaryotic translation initiation factor 3 (eIF-3) complex. The eIF-3 complex interacts with pix.

The protein localises to the cytoplasm. Functionally, RNA-binding component of the eukaryotic translation initiation factor 3 (eIF-3) complex, which is involved in protein synthesis of a specialized repertoire of mRNAs and, together with other initiation factors, stimulates binding of mRNA and methionyl-tRNAi to the 40S ribosome. The eIF-3 complex specifically targets and initiates translation of a subset of mRNAs involved in cell proliferation. This subunit can bind 18S rRNA. In Drosophila melanogaster (Fruit fly), this protein is Eukaryotic translation initiation factor 3 subunit G-2.